The chain runs to 314 residues: Taste receptor type 2 member 42 (314 aa).

Residues 1–7 are Extracellular-facing; the sequence is MPTELDK. The chain crosses the membrane as a helical span at residues 8-28; sequence IFLILAIVEFIIGLLGNVFIG. Over 29-50 the chain is Cytoplasmic; the sequence is LVNCSEGIKNQKVFSADFILTC. A helical transmembrane segment spans residues 51 to 71; sequence LAISTIGQLLVILFDSFLVGL. Residues 72-101 lie on the Extracellular side of the membrane; that stretch reads ASHLYTTYRLGKLVILLWHMTNHLTTWLAT. Residues 102–122 form a helical membrane-spanning segment; sequence CLSIFYFFKIAHFPHSLFLWL. The Cytoplasmic segment spans residues 123 to 127; that stretch reads RWRMN. A helical transmembrane segment spans residues 128–148; the sequence is GMIVMLRTLSLFLLIFDSLVL. Over 149 to 187 the chain is Extracellular; it reads KLFIDISLNIIDKSNLTLYFDESKTLYDKLSILKTLLSL. Residue N163 is glycosylated (N-linked (GlcNAc...) asparagine). Residues 188–208 form a helical membrane-spanning segment; the sequence is TSFIPFSLSLTSLLFLFLSLV. Residues 209–238 are Cytoplasmic-facing; the sequence is RHTRNLKLSSLGSRDSSTEAHRRAMKMVMS. Residues 239 to 259 traverse the membrane as a helical segment; the sequence is FLFLFIVHFFSLQVANWIFFM. The Extracellular portion of the chain corresponds to 260–265; the sequence is SWNNKY. Residues 266 to 286 traverse the membrane as a helical segment; it reads IKFVMLALNAFPSCHSFILIL. The Cytoplasmic segment spans residues 287-314; sequence GNSKLRQTAVRLLSHLRNYTKTSNPLPL.

The protein belongs to the G-protein coupled receptor T2R family.

Its subcellular location is the membrane. Its function is as follows. Receptor that may play a role in the perception of bitterness and is gustducin-linked. May play a role in sensing the chemical composition of the gastrointestinal content. The activity of this receptor may stimulate alpha gustducin, mediate PLC-beta-2 activation and lead to the gating of TRPM5. The sequence is that of Taste receptor type 2 member 42 (TAS2R42) from Pongo pygmaeus (Bornean orangutan).